We begin with the raw amino-acid sequence, 233 residues long: tRNA (guanine-N(7)-)-methyltransferase (233 aa).

Residues E62, E87, D114, and D136 each contribute to the S-adenosyl-L-methionine site. D136 is a catalytic residue. Residues K140, D172, and 211 to 214 (TRYE) contribute to the substrate site.

It belongs to the class I-like SAM-binding methyltransferase superfamily. TrmB family.

It catalyses the reaction guanosine(46) in tRNA + S-adenosyl-L-methionine = N(7)-methylguanosine(46) in tRNA + S-adenosyl-L-homocysteine. Its pathway is tRNA modification; N(7)-methylguanine-tRNA biosynthesis. Functionally, catalyzes the formation of N(7)-methylguanine at position 46 (m7G46) in tRNA. This Erythrobacter litoralis (strain HTCC2594) protein is tRNA (guanine-N(7)-)-methyltransferase.